The chain runs to 135 residues: Histone H3 type 1 (135 aa).

Positions 1-40 (MARTKQTARKSTGGKAPRKQLATKAARKTPATGGVKKPHR) are disordered. Lys5 bears the N6-methyllysine mark. Lys10 is modified (N6-acetyllysine; alternate). Lys10 carries the post-translational modification N6-methyllysine; alternate. A Phosphoserine modification is found at Ser11. The residue at position 12 (Thr12) is a Phosphothreonine. N6-acetyllysine occurs at positions 15, 19, and 24. Lys28 bears the N6-acetyllysine; alternate mark. An N6-methyllysine; alternate modification is found at Lys28. Residues Lys36 and Lys37 each carry the N6-methyllysine modification.

It belongs to the histone H3 family. In terms of assembly, the nucleosome is a histone octamer containing two molecules each of H2A, H2B, H3 and H4 assembled in one H3-H4 heterotetramer and two H2A-H2B heterodimers. The octamer wraps approximately 147 bp of DNA. In terms of processing, acetylation is generally linked to gene activation. Acetylated to form H3K9ac (11%), H3K14ac (17%), H3K18ac (11%), H3K23ac (16%) and H3K27ac (7%). H3K4, H3K35 and H3K36 are not acetylated. H3K4me prevents acetylation. 32% of the histone H3 are acetylated with, on average, 2.4 acetyl-Lys. They are all continuously deacatylated and re-acetylated with a half-life of approximately 2 minutes. Post-translationally, monomethylated to form H3K4me1 (81%), H3K9me1 (16%), H3K27me1 (25%), H3K35me1 (25%) and H3K36me1 (5%). No methylation at H3K14, H3K18 and H3K23. Methylated by a protein complex that includes Mut11. Set1 methylates specifically H3K4. H3K4me1 is associated with silenced euchromatin. Set3 forms H3K9me1, while H3K9me2 is undetected. H3K9me1 is specifically associated with silent, multi-copy transgenes. No phosphorylation detected.

The protein resides in the nucleus. It is found in the chromosome. Its function is as follows. Core component of nucleosome. Nucleosomes wrap and compact DNA into chromatin, limiting DNA accessibility to the cellular machineries which require DNA as a template. Histones thereby play a central role in transcription regulation, DNA repair, DNA replication and chromosomal stability. DNA accessibility is regulated via a complex set of post-translational modifications of histones, also called histone code, and nucleosome remodeling. The sequence is that of Histone H3 type 1 (ch3-I) from Chlamydomonas reinhardtii (Chlamydomonas smithii).